A 475-amino-acid chain; its full sequence is Putative poly(A) polymerase catalytic subunit (475 aa).

Belongs to the poxviridae poly(A) polymerase catalytic subunit family. Highly divergent.

It localises to the virion. The enzyme catalyses RNA(n) + ATP = RNA(n)-3'-adenine ribonucleotide + diphosphate. Its function is as follows. Polymerase that creates the 3'-poly(A) tail of mRNAs. The chain is Putative poly(A) polymerase catalytic subunit from Ornithodoros (relapsing fever ticks).